Reading from the N-terminus, the 99-residue chain is Small ribosomal subunit protein uS14m (99 aa).

This sequence belongs to the universal ribosomal protein uS14 family.

Its subcellular location is the mitochondrion. The protein is Small ribosomal subunit protein uS14m (RPS14) of Marchantia polymorpha (Common liverwort).